Consider the following 255-residue polypeptide: Flap endonuclease Xni (255 aa).

Residue Asp105 coordinates Mg(2+). Positions 162-253 constitute a 5'-3' exonuclease domain; the sequence is EHSQFIDYLA…NLSQFRLPNP (92 aa). 5 residues coordinate K(+): Leu172, Ala173, Pro181, Val183, and Ile186. Residues 185–190 form an interaction with DNA region; sequence GIGPKS.

This sequence belongs to the Xni family. Mg(2+) serves as cofactor. The cofactor is K(+).

Has flap endonuclease activity. During DNA replication, flap endonucleases cleave the 5'-overhanging flap structure that is generated by displacement synthesis when DNA polymerase encounters the 5'-end of a downstream Okazaki fragment. The chain is Flap endonuclease Xni from Shewanella sediminis (strain HAW-EB3).